Consider the following 341-residue polypeptide: Glyceraldehyde-3-phosphate dehydrogenase 2 (341 aa).

NAD(+)-binding positions include 13 to 14 (RI), aspartate 35, and arginine 85. D-glyceraldehyde 3-phosphate contacts are provided by residues 157-159 (SCT), threonine 188, 217-218 (TG), and arginine 240. Cysteine 158 functions as the Nucleophile in the catalytic mechanism. An NAD(+)-binding site is contributed by asparagine 322.

Belongs to the glyceraldehyde-3-phosphate dehydrogenase family. As to quaternary structure, homotetramer.

It localises to the cytoplasm. It carries out the reaction D-glyceraldehyde 3-phosphate + phosphate + NAD(+) = (2R)-3-phospho-glyceroyl phosphate + NADH + H(+). Its pathway is carbohydrate degradation; glycolysis; pyruvate from D-glyceraldehyde 3-phosphate: step 1/5. This chain is Glyceraldehyde-3-phosphate dehydrogenase 2 (gpd-2), found in Caenorhabditis elegans.